The sequence spans 354 residues: Selenide, water dikinase (354 aa).

Residue Cys-23 is part of the active site. Residues Lys-26 and 54-56 (TSD) each bind ATP. A Mg(2+)-binding site is contributed by Asp-57. ATP contacts are provided by residues Asp-74, Asp-97, and 145-147 (GHS). Asp-97 contacts Mg(2+). Asp-233 is a Mg(2+) binding site.

The protein belongs to the selenophosphate synthase 1 family. Class I subfamily. In terms of assembly, homodimer. It depends on Mg(2+) as a cofactor.

It carries out the reaction hydrogenselenide + ATP + H2O = selenophosphate + AMP + phosphate + 2 H(+). In terms of biological role, synthesizes selenophosphate from selenide and ATP. The chain is Selenide, water dikinase from Burkholderia pseudomallei (strain K96243).